The sequence spans 462 residues: Argininosuccinate lyase (462 aa).

Belongs to the lyase 1 family. Argininosuccinate lyase subfamily.

The protein resides in the cytoplasm. The enzyme catalyses 2-(N(omega)-L-arginino)succinate = fumarate + L-arginine. It functions in the pathway amino-acid biosynthesis; L-arginine biosynthesis; L-arginine from L-ornithine and carbamoyl phosphate: step 3/3. This chain is Argininosuccinate lyase, found in Gloeothece citriformis (strain PCC 7424) (Cyanothece sp. (strain PCC 7424)).